The sequence spans 542 residues: GATA-type transcription factor sreA (542 aa).

The segment covering 1–10 (MLTLRSSSDT) has biased composition (polar residues). A disordered region spans residues 1 to 172 (MLTLRSSSDT…SAQNASGCGS (172 aa)). Residues 44-63 (ADLRPDSFDASRSPDGDKAS) show a composition bias toward basic and acidic residues. Low complexity-rich tracts occupy residues 75–117 (SSDQ…PKAS) and 148–168 (SSTS…QNAS). The interval 178–196 (CPGGGSCNGTGGAVGCDGC) is cystein-rich region (CRR). Residues 210–223 (APSARQARASPSAQ) show a composition bias toward low complexity. The tract at residues 210–248 (APSARQARASPSAQTSEEQAQSGLDALDSASQDASGMPK) is disordered. The GATA-type zinc-finger motif lies at 250–274 (CQNCGTTLTPLWRRDDQGNTICNAC). Positions 289-300 (MKKTVIKRRKRV) are enriched in basic residues. Disordered regions lie at residues 289–408 (MKKT…PATR) and 461–525 (SNAP…REAE). 2 stretches are compositionally biased toward polar residues: residues 311-320 (AGSSDNSSVS) and 369-387 (KPTQ…NHSP). Residues 396-407 (ESTSAESAPPAT) show a composition bias toward low complexity. The segment covering 464–483 (PARSQTQTQPQPGTRSYSPN) has biased composition (polar residues). A coiled-coil region spans residues 510-542 (DKVKAARRAQLQREAENMREALRAKERELASLK).

It localises to the nucleus. GATA-type transcription repressor that regulates iron acquisition genes through specific binding the GATA sequence elements of target promoters. SreA targets include genes encoding a number of key iron-regulated factors such as the siderophore biosynthesis genes. Is dispensable for growth on keratin substrates. SreA represses the expression of hapX and the siderophore system during iron sufficient conditions by an iron-sensing mechanism, while hapX represses sreA and activates the siderophore system during iron-limiting conditions resulting in efficient iron uptake and inhibition of iron-consuming pathways. This chain is GATA-type transcription factor sreA, found in Arthroderma benhamiae (strain ATCC MYA-4681 / CBS 112371) (Trichophyton mentagrophytes).